Here is a 527-residue protein sequence, read N- to C-terminus: Light-independent protochlorophyllide reductase subunit B (527 aa).

Residue aspartate 36 participates in [4Fe-4S] cluster binding. Aspartate 290 acts as the Proton donor in catalysis. 425–426 (GL) is a binding site for substrate.

Belongs to the ChlB/BchB/BchZ family. As to quaternary structure, protochlorophyllide reductase is composed of three subunits; ChlL, ChlN and ChlB. Forms a heterotetramer of two ChlB and two ChlN subunits. The cofactor is [4Fe-4S] cluster.

It carries out the reaction chlorophyllide a + oxidized 2[4Fe-4S]-[ferredoxin] + 2 ADP + 2 phosphate = protochlorophyllide a + reduced 2[4Fe-4S]-[ferredoxin] + 2 ATP + 2 H2O. Its pathway is porphyrin-containing compound metabolism; chlorophyll biosynthesis (light-independent). Functionally, component of the dark-operative protochlorophyllide reductase (DPOR) that uses Mg-ATP and reduced ferredoxin to reduce ring D of protochlorophyllide (Pchlide) to form chlorophyllide a (Chlide). This reaction is light-independent. The NB-protein (ChlN-ChlB) is the catalytic component of the complex. This is Light-independent protochlorophyllide reductase subunit B from Synechococcus sp. (strain RCC307).